The primary structure comprises 355 residues: MLNRSIHEITLPLKVIIGSNILDKIPDYLLKMKLTNQYKAGIITGPTTYNVAGKIVEEAMKNNGYIVEVWKARDARIETANQIVEETKKHGIKIFLGVGGGKSIDLAKYAAYKNNGYMISVPTAASHDGIASPFASLKGTSKPTSTPTTTPYAIIADIDMISKAPPRLIRSGVGDLLGKLTAVKDWQLAHRLKGEYYGEYAAQLALLSAKHVIRYHELIASGNPDGIRIVVEALISSGVAMCIAGSSRPASGSEHLFSHALDLLAPGKALHGEQVALGTIMMLYLYGDPKWKKIKRIMKKIGLPTTAEEIGIPIETIVKALTIAHKIRPNRYTILGEKGLTEEAAWRLVRETGII.

NAD(+) contacts are provided by residues 101-105 (GKSID) and 123-126 (TAAS). Asp-128 is a substrate binding site. NAD(+) is bound at residue Ser-132. Asp-175 provides a ligand contact to substrate. Zn(2+)-binding residues include Asp-175 and His-255. His-259 is a binding site for substrate. Position 271 (His-271) interacts with Zn(2+).

This sequence belongs to the glycerol-1-phosphate dehydrogenase family. As to quaternary structure, homodimer. Requires Zn(2+) as cofactor.

It is found in the cytoplasm. It catalyses the reaction sn-glycerol 1-phosphate + NAD(+) = dihydroxyacetone phosphate + NADH + H(+). It carries out the reaction sn-glycerol 1-phosphate + NADP(+) = dihydroxyacetone phosphate + NADPH + H(+). Its pathway is membrane lipid metabolism; glycerophospholipid metabolism. Its function is as follows. Catalyzes the NAD(P)H-dependent reduction of dihydroxyacetonephosphate (DHAP or glycerone phosphate) to glycerol 1-phosphate (G1P). The G1P thus generated is used as the glycerophosphate backbone of phospholipids in the cellular membranes of Archaea. The polypeptide is Glycerol-1-phosphate dehydrogenase [NAD(P)+] (Staphylothermus marinus (strain ATCC 43588 / DSM 3639 / JCM 9404 / F1)).